The following is a 163-amino-acid chain: Nucleotide-binding protein BBR47_25280 (163 aa).

Belongs to the YajQ family.

Nucleotide-binding protein. This chain is Nucleotide-binding protein BBR47_25280, found in Brevibacillus brevis (strain 47 / JCM 6285 / NBRC 100599).